The sequence spans 239 residues: Phosphoglycolate phosphatase (239 aa).

The active-site Nucleophile is the Asp14. Mg(2+) contacts are provided by Asp14 and Asp16. Lys160 contacts substrate. Positions 183 and 187 each coordinate Mg(2+).

It belongs to the archaeal SPP-like hydrolase family. The cofactor is Mg(2+).

It catalyses the reaction 2-phosphoglycolate + H2O = glycolate + phosphate. Catalyzes the dephosphorylation of 2-phosphoglycolate. This Aeropyrum pernix (strain ATCC 700893 / DSM 11879 / JCM 9820 / NBRC 100138 / K1) protein is Phosphoglycolate phosphatase.